Reading from the N-terminus, the 396-residue chain is Phosphoglycerate kinase (396 aa).

Residues 21–23 (DFN), Arg36, 59–62 (HLGK), Arg119, and Arg156 contribute to the substrate site. ATP contacts are provided by residues Lys206, Gly294, Glu325, and 352-355 (GGDS).

It belongs to the phosphoglycerate kinase family. Monomer.

The protein resides in the cytoplasm. It carries out the reaction (2R)-3-phosphoglycerate + ATP = (2R)-3-phospho-glyceroyl phosphate + ADP. It functions in the pathway carbohydrate degradation; glycolysis; pyruvate from D-glyceraldehyde 3-phosphate: step 2/5. The chain is Phosphoglycerate kinase from Staphylococcus aureus (strain USA300).